Consider the following 51-residue polypeptide: Large ribosomal subunit protein eL40 (51 aa).

Residues Cys17, Cys20, Cys31, and Cys34 each coordinate Zn(2+).

The protein belongs to the eukaryotic ribosomal protein eL40 family. In terms of assembly, part of the 50S ribosomal subunit. Zn(2+) serves as cofactor.

The polypeptide is Large ribosomal subunit protein eL40 (Thermococcus kodakarensis (strain ATCC BAA-918 / JCM 12380 / KOD1) (Pyrococcus kodakaraensis (strain KOD1))).